The primary structure comprises 81 residues: Conotoxin Vc6.13 (81 aa).

Residues M1–A19 form the signal peptide. Positions L20–W44 are excised as a propeptide. Intrachain disulfides connect C49-C63, C56-C67, and C62-C72.

It belongs to the conotoxin O2 superfamily. Expressed by the venom duct.

It localises to the secreted. Functionally, inhibits voltage-gated ion channels. The protein is Conotoxin Vc6.13 of Conus victoriae (Queen Victoria cone).